The sequence spans 90 residues: U7-theraphotoxin-Hhn1e (90 aa).

Positions 1-19 (MKTAIFTVVLALAVFAVLS) are cleaved as a signal peptide. The propeptide occupies 20–50 (FGWEANEKALSEEFTELIHEKEAASETEARE). 3 cysteine pairs are disulfide-bonded: Cys51/Cys65, Cys58/Cys70, and Cys64/Cys81.

The protein belongs to the neurotoxin 10 (Hwtx-1) family. 13 (Hntx-13) subfamily. In terms of tissue distribution, expressed by the venom gland.

It localises to the secreted. Ion channel inhibitor. This is U7-theraphotoxin-Hhn1e from Cyriopagopus hainanus (Chinese bird spider).